The sequence spans 107 residues: UPF0045 protein in glkA 3'region (107 aa).

It belongs to the UPF0045 family.

The chain is UPF0045 protein in glkA 3'region (dglA) from Staphylococcus xylosus.